Here is a 181-residue protein sequence, read N- to C-terminus: Cyclic AMP-dependent transcription factor ATF-3 (181 aa).

Positions 73–97 (EMSVTKSEAAPEEDERKRRRRERNK) are disordered. A Glycyl lysine isopeptide (Lys-Gly) (interchain with G-Cter in SUMO2) cross-link involves residue Lys-78. One can recognise a bZIP domain in the interval 86–149 (DERKRRRRER…QHLIYMLNLH (64 aa)). Positions 88 to 110 (RKRRRRERNKIAAAKCRNKKKEK) are basic motif. The segment at 114 to 142 (LQKESEKLESVNAELKAQIEELKNEKQHL) is leucine-zipper. The residue at position 162 (Thr-162) is a Phosphothreonine. A Glycyl lysine isopeptide (Lys-Gly) (interchain with G-Cter in SUMO2) cross-link involves residue Lys-175.

It belongs to the bZIP family. ATF subfamily. In terms of assembly, binds DNA as a homodimer or a heterodimer. Interacts with KAT5; promoting KAT5 autoacetylation and KAT5 deubiquitination by USP7.

It is found in the nucleus. Functionally, this protein binds the cAMP response element (CRE) (consensus: 5'-GTGACGT[AC][AG]-3'), a sequence present in many viral and cellular promoters. Represses transcription from promoters with ATF sites. It may repress transcription by stabilizing the binding of inhibitory cofactors at the promoter. The protein is Cyclic AMP-dependent transcription factor ATF-3 of Mus musculus (Mouse).